Reading from the N-terminus, the 231-residue chain is 2-C-methyl-D-erythritol 4-phosphate cytidylyltransferase (231 aa).

It belongs to the IspD/TarI cytidylyltransferase family. IspD subfamily.

It carries out the reaction 2-C-methyl-D-erythritol 4-phosphate + CTP + H(+) = 4-CDP-2-C-methyl-D-erythritol + diphosphate. The protein operates within isoprenoid biosynthesis; isopentenyl diphosphate biosynthesis via DXP pathway; isopentenyl diphosphate from 1-deoxy-D-xylulose 5-phosphate: step 2/6. In terms of biological role, catalyzes the formation of 4-diphosphocytidyl-2-C-methyl-D-erythritol from CTP and 2-C-methyl-D-erythritol 4-phosphate (MEP). The sequence is that of 2-C-methyl-D-erythritol 4-phosphate cytidylyltransferase from Shewanella pealeana (strain ATCC 700345 / ANG-SQ1).